A 386-amino-acid polypeptide reads, in one-letter code: O-phospho-L-seryl-tRNA:Cys-tRNA synthase (386 aa).

Residues 89 to 90 (AR), Asn-196, and 219 to 221 (SGH) contribute to the pyridoxal 5'-phosphate site. Lys-222 carries the N6-(pyridoxal phosphate)lysine modification.

The protein belongs to the SepCysS family. Homodimer. Interacts with SepRS. Pyridoxal 5'-phosphate is required as a cofactor.

It carries out the reaction O-phospho-L-seryl-tRNA(Cys) + hydrogen sulfide + H(+) = L-cysteinyl-tRNA(Cys) + phosphate. Functionally, converts O-phospho-L-seryl-tRNA(Cys) (Sep-tRNA(Cys)) to L-cysteinyl-tRNA(Cys) (Cys-tRNA(Cys)). This chain is O-phospho-L-seryl-tRNA:Cys-tRNA synthase, found in Methanosarcina acetivorans (strain ATCC 35395 / DSM 2834 / JCM 12185 / C2A).